A 359-amino-acid polypeptide reads, in one-letter code: 4-dedimethylamino-4-oxo-anhydrotetracycline transaminase OxyQ (359 aa).

Substrate contacts are provided by Gly-32, Lys-92, and Asn-155. Pyridoxal 5'-phosphate contacts are provided by residues Thr-91–Lys-92, Asn-155, Tyr-186, and Ser-216–Ser-218. Lys-219 is subject to N6-(pyridoxal phosphate)lysine. Arg-227 contacts pyridoxal 5'-phosphate. Arg-341 serves as a coordination point for substrate.

It belongs to the class-I pyridoxal-phosphate-dependent aminotransferase family. It depends on pyridoxal 5'-phosphate as a cofactor.

Its pathway is antibiotic biosynthesis; oxytetracycline biosynthesis. Functionally, involved in the biosynthesis of the tetracycline antibiotic, oxytetracycline. Catalyzes the conversion of 4-dedimethylamino-4-oxoanhydrotetracycline to yield 4-amino-4-de(dimethylamino)anhydrotetracycline (4-amino-ATC). This Streptomyces rimosus protein is 4-dedimethylamino-4-oxo-anhydrotetracycline transaminase OxyQ.